The primary structure comprises 176 residues: Endoribonuclease YbeY (176 aa).

Zn(2+) is bound by residues histidine 138, histidine 142, and histidine 148.

This sequence belongs to the endoribonuclease YbeY family. It depends on Zn(2+) as a cofactor.

It is found in the cytoplasm. Functionally, single strand-specific metallo-endoribonuclease involved in late-stage 70S ribosome quality control and in maturation of the 3' terminus of the 16S rRNA. In Trichormus variabilis (strain ATCC 29413 / PCC 7937) (Anabaena variabilis), this protein is Endoribonuclease YbeY.